We begin with the raw amino-acid sequence, 55 residues long: MAVPKRRMSRANTHTRRSQWKANNAPLQEVRVNGNTTRLPRRLVKAAQLGLVETD.

Basic residues predominate over residues 1-19 (MAVPKRRMSRANTHTRRSQ). Residues 1–21 (MAVPKRRMSRANTHTRRSQWK) are disordered.

The protein belongs to the bacterial ribosomal protein bL32 family.

The sequence is that of Large ribosomal subunit protein bL32 from Corynebacterium kroppenstedtii (strain DSM 44385 / JCM 11950 / CIP 105744 / CCUG 35717).